The chain runs to 249 residues: LexA repressor (249 aa).

A disordered region spans residues 1-25; it reads MAAAATGGRATSQPKKTTKGLTPRQ. A DNA-binding region (H-T-H motif) is located at residues 45-65; that stretch reads MREIGDTVGLASLSSVTHQLS. Active-site for autocatalytic cleavage activity residues include serine 173 and lysine 210.

This sequence belongs to the peptidase S24 family. As to quaternary structure, homodimer.

The enzyme catalyses Hydrolysis of Ala-|-Gly bond in repressor LexA.. Its function is as follows. Represses a number of genes involved in the response to DNA damage (SOS response), including recA and lexA. In the presence of single-stranded DNA, RecA interacts with LexA causing an autocatalytic cleavage which disrupts the DNA-binding part of LexA, leading to derepression of the SOS regulon and eventually DNA repair. This is LexA repressor from Pseudarthrobacter chlorophenolicus (strain ATCC 700700 / DSM 12829 / CIP 107037 / JCM 12360 / KCTC 9906 / NCIMB 13794 / A6) (Arthrobacter chlorophenolicus).